Reading from the N-terminus, the 542-residue chain is Protein MGF 505-11L (542 aa).

It belongs to the asfivirus MGF 505 family.

Its function is as follows. Plays a role in virus cell tropism, and may be required for efficient virus replication in macrophages. This chain is Protein MGF 505-11L, found in African swine fever virus (isolate Warthog/Namibia/Wart80/1980) (ASFV).